The primary structure comprises 396 residues: Arginine biosynthesis bifunctional protein ArgJ (396 aa).

Residues threonine 150, lysine 177, threonine 188, glutamate 267, asparagine 391, and threonine 396 each contribute to the substrate site. The active-site Nucleophile is the threonine 188.

The protein belongs to the ArgJ family. As to quaternary structure, heterotetramer of two alpha and two beta chains.

The protein resides in the cytoplasm. The catalysed reaction is N(2)-acetyl-L-ornithine + L-glutamate = N-acetyl-L-glutamate + L-ornithine. It catalyses the reaction L-glutamate + acetyl-CoA = N-acetyl-L-glutamate + CoA + H(+). It functions in the pathway amino-acid biosynthesis; L-arginine biosynthesis; L-ornithine and N-acetyl-L-glutamate from L-glutamate and N(2)-acetyl-L-ornithine (cyclic): step 1/1. It participates in amino-acid biosynthesis; L-arginine biosynthesis; N(2)-acetyl-L-ornithine from L-glutamate: step 1/4. Catalyzes two activities which are involved in the cyclic version of arginine biosynthesis: the synthesis of N-acetylglutamate from glutamate and acetyl-CoA as the acetyl donor, and of ornithine by transacetylation between N(2)-acetylornithine and glutamate. This chain is Arginine biosynthesis bifunctional protein ArgJ, found in Wolinella succinogenes (strain ATCC 29543 / DSM 1740 / CCUG 13145 / JCM 31913 / LMG 7466 / NCTC 11488 / FDC 602W) (Vibrio succinogenes).